We begin with the raw amino-acid sequence, 183 residues long: Translation initiation factor IF-3 (183 aa).

Belongs to the IF-3 family. As to quaternary structure, monomer.

It is found in the cytoplasm. Its function is as follows. IF-3 binds to the 30S ribosomal subunit and shifts the equilibrium between 70S ribosomes and their 50S and 30S subunits in favor of the free subunits, thus enhancing the availability of 30S subunits on which protein synthesis initiation begins. This chain is Translation initiation factor IF-3, found in Pseudomonas putida (strain ATCC 700007 / DSM 6899 / JCM 31910 / BCRC 17059 / LMG 24140 / F1).